Here is a 411-residue protein sequence, read N- to C-terminus: Putative ion-transport protein YfeO (411 aa).

The next 11 helical transmembrane spans lie at 9–29 (MLLL…VLIA), 54–74 (DSPF…GLII), 99–119 (ALPG…SLGP), 149–169 (ILAS…AALI), 186–206 (LFAP…FFHP), 223–243 (IASG…AVWC), 258–278 (VLIL…GGPL), 296–316 (LGAG…VIAA), 322–342 (GGRI…LHAH), 343–363 (VEAV…VLVV), and 386–406 (LLCI…LLAA).

This sequence belongs to the chloride channel (TC 2.A.49) family.

Its subcellular location is the cell membrane. The sequence is that of Putative ion-transport protein YfeO from Salmonella choleraesuis (strain SC-B67).